The primary structure comprises 207 residues: MSKLSRRQQEILDYIKEEVRAKGYPPSVREIGEAVGLASSSTVHGHLSRLEKKGYIRRDPTKPRAIEVLDLENLASETTEAKATYIPVVGKVTAGLPITAVENVEEYFPLPEQLTANDNTYALRIQGDSMIEAGIFDGDLVIVRQQQTADNGDIIVAMTEEDEATVKRFFREKDYIRLQPENSTMEPIILTTCTILGKVIGVFRTIH.

The H-T-H motif DNA-binding region spans 28–48 (VREIGEAVGLASSSTVHGHLS). Residues Ser129 and Lys167 each act as for autocatalytic cleavage activity in the active site.

It belongs to the peptidase S24 family. Homodimer.

It carries out the reaction Hydrolysis of Ala-|-Gly bond in repressor LexA.. Its function is as follows. Represses a number of genes involved in the response to DNA damage (SOS response), including recA and lexA. In the presence of single-stranded DNA, RecA interacts with LexA causing an autocatalytic cleavage which disrupts the DNA-binding part of LexA, leading to derepression of the SOS regulon and eventually DNA repair. The protein is LexA repressor of Halalkalibacterium halodurans (strain ATCC BAA-125 / DSM 18197 / FERM 7344 / JCM 9153 / C-125) (Bacillus halodurans).